Consider the following 548-residue polypeptide: Sulochrin halogenase gedL (548 aa).

FAD contacts are provided by Gly14, Ala17, and Glu47. Chloride contacts are provided by Ser333 and Gly334. Val335 provides a ligand contact to FAD.

It belongs to the flavin-dependent halogenase family.

It catalyses the reaction sulochrin + 2 FADH2 + 2 chloride + 2 O2 = dihydrogeodin + 2 FAD + 4 H2O + H(+). It participates in secondary metabolite biosynthesis. Functionally, sulochrin halogenase; part of the gene cluster that mediates the biosynthesis of geodin, an intermediate in the biosynthesis of other natural products. The pathway begins with the synthesis of atrochrysone thioester by the polyketide synthase (PKS) gedC. The atrochrysone carboxyl ACP thioesterase gedB then breaks the thioester bond and releases the atrochrysone carboxylic acid from gedC. The atrochrysone carboxylic acid is then converted to atrochrysone which is further transformed into emodinanthrone. The next step is performed by the emodinanthrone oxygenase gedH that catalyzes the oxidation of emodinanthrone to emodin. Emodin O-methyltransferase encoded probably by gedA then catalyzes methylation of the 8-hydroxy group of emodin to form questin. Ring cleavage of questin by questin oxidase gedK leads to desmethylsulochrin via several intermediates including questin epoxide. Another methylation step probably catalyzed by methyltransferase gedG leads to the formation of sulochrin which is further converted to dihydrogeodin by the sulochrin halogenase gedL. Finally, the dihydrogeodin oxidase gedJ catalyzes the stereospecific phenol oxidative coupling reaction converting dihydrogeodin to geodin. This chain is Sulochrin halogenase gedL, found in Aspergillus terreus (strain NIH 2624 / FGSC A1156).